Reading from the N-terminus, the 316-residue chain is RING finger protein 148 (316 aa).

The first 12 residues, 1 to 12 (MLLCVSCLSVNG), serve as a signal peptide directing secretion. N-linked (GlcNAc...) asparagine glycosylation is present at Asn-56. Residues 84-178 (VSGAVVLPEG…GNLKGMELLH (95 aa)) form the PA domain. A run of 2 helical transmembrane segments spans residues 173–193 (GMEL…IEVG) and 204–224 (VMSL…YCAW). An RING-type; atypical zinc finger spans residues 269–310 (CVVCFDMYKAQDVIRILTCKHFFHKTCIDPWLLAHRTCPMCK).

The protein resides in the membrane. This Mus musculus (Mouse) protein is RING finger protein 148 (Rnf148).